We begin with the raw amino-acid sequence, 347 residues long: NADH-ubiquinone oxidoreductase chain 2 (347 aa).

A run of 11 helical transmembrane segments spans residues 3 to 23, 25 to 45, 59 to 79, 96 to 116, 122 to 142, 149 to 169, 178 to 198, 201 to 221, 237 to 257, 274 to 294, and 326 to 346; these read PLIFTMILLTVMLGTAIVMTT, HWVMAWIGFEMNMLAIIPILM, YFLTQATASMLLMLAIVINLT, IIMTLAMAMKLGLAPFHFWVP, VQLSSGLILLTWQKLAPMSIL, INLDLLLLMSILSILVGGWGG, ILAYSSIAHMGWMTAIMVYNP, ALLNLAIYILLTTTTFVMLMV, MPLLTTAILTIMLSLGGLPPL, DSMITPTIMAVMTLLNLYFYM, and LSPLIILSTLILPLSPMLALL.

It belongs to the complex I subunit 2 family. Core subunit of respiratory chain NADH dehydrogenase (Complex I) which is composed of 45 different subunits. Interacts with TMEM242.

It is found in the mitochondrion inner membrane. The catalysed reaction is a ubiquinone + NADH + 5 H(+)(in) = a ubiquinol + NAD(+) + 4 H(+)(out). In terms of biological role, core subunit of the mitochondrial membrane respiratory chain NADH dehydrogenase (Complex I) which catalyzes electron transfer from NADH through the respiratory chain, using ubiquinone as an electron acceptor. Essential for the catalytic activity and assembly of complex I. This chain is NADH-ubiquinone oxidoreductase chain 2, found in Nyctimene aello (Broad-striped tube-nosed fruit bat).